The chain runs to 149 residues: Pleckstrin homology domain-containing family J member 1 (149 aa).

Positions 15-108 constitute a PH domain; the sequence is RAEKAAELSM…WVEALTNASY (94 aa).

This chain is Pleckstrin homology domain-containing family J member 1 (plekhj1), found in Xenopus tropicalis (Western clawed frog).